A 673-amino-acid chain; its full sequence is uncharacterized protein (673 aa).

Residues 1–208 (MSTHSNDYFS…STGQLELPPD (208 aa)) lie on the Cytoplasmic side of the membrane. 3 positions are modified to phosphoserine: Ser-57, Ser-112, and Ser-172. Residues 209 to 229 (GGYGWVVTFCVFLTMFSTWGC) traverse the membrane as a helical segment. Asn-230 carries an N-linked (GlcNAc...) asparagine glycan. Residues 230–255 (NASFGVDLAYYLNHDTYPGASKYDYA) are Lumenal-facing. The helical transmembrane segment at 256-276 (LIAGLTVFLGQLLSPLVMALM) threads the bilayer. A topological domain (cytoplasmic) is located at residue Arg-277. A helical transmembrane segment spans residues 278 to 298 (IIGLRTTMLFGDAVMLAAYLL). Residues 299–315 (ASFTTKLWQLYVTQGFM) lie on the Lumenal side of the membrane. The helical transmembrane segment at 316 to 336 (VGCSISLIFVPATTVLPGWFL) threads the bilayer. Over 337–339 (KKR) the chain is Cytoplasmic. Residues 340–360 (AVAMGVSLLGTGAGGVVYGLA) form a helical membrane-spanning segment. Topologically, residues 361–372 (TNKMLSDFGNTR) are lumenal. A helical membrane pass occupies residues 373-393 (WCLRIIGISCSISVLVAIALL). Residues 394 to 426 (KERNPTPAIGLKSPRAMFEQLKAMFSLKVITKP) are Cytoplasmic-facing. Residues 427 to 447 (FVVLIALWFMFALFAYNMMVF) traverse the membrane as a helical segment. The Lumenal segment spans residues 448 to 504 (TLSSYAISKGLSSHDASTLTAILNGSQSIGRPLMGLAGDKFGRANVTIVLTTLLTIY). Asn-471 and Asn-492 each carry an N-linked (GlcNAc...) asparagine glycan. A helical membrane pass occupies residues 505–525 (MFAFWIPAHTFVQLIFFSILV). Over 526 to 549 (GSCVGVANVMNTVLIADMVKPEEF) the chain is Cytoplasmic. A helical membrane pass occupies residues 550–570 (LPAWAFVNYCGAPFLLVCEVI). The Lumenal portion of the chain corresponds to 571–584 (AQALTVEKDKSNPY). Residues 585–605 (LHAQIFCGCCFIAALILISIL) form a helical membrane-spanning segment. Over 606 to 673 (REYSIRMKLT…FLRMVYPMKV (68 aa)) the chain is Cytoplasmic. Position 637 is a phosphoserine (Ser-637).

Belongs to the major facilitator superfamily. Monocarboxylate porter (TC 2.A.1.13) family.

Its subcellular location is the endoplasmic reticulum membrane. This is an uncharacterized protein from Saccharomyces cerevisiae (strain ATCC 204508 / S288c) (Baker's yeast).